The sequence spans 144 residues: D-aminoacyl-tRNA deacylase (144 aa).

The Gly-cisPro motif, important for rejection of L-amino acids signature appears at 136-137; it reads GP.

The protein belongs to the DTD family. As to quaternary structure, homodimer.

It localises to the cytoplasm. The enzyme catalyses glycyl-tRNA(Ala) + H2O = tRNA(Ala) + glycine + H(+). The catalysed reaction is a D-aminoacyl-tRNA + H2O = a tRNA + a D-alpha-amino acid + H(+). Its function is as follows. An aminoacyl-tRNA editing enzyme that deacylates mischarged D-aminoacyl-tRNAs. Also deacylates mischarged glycyl-tRNA(Ala), protecting cells against glycine mischarging by AlaRS. Acts via tRNA-based rather than protein-based catalysis; rejects L-amino acids rather than detecting D-amino acids in the active site. By recycling D-aminoacyl-tRNA to D-amino acids and free tRNA molecules, this enzyme counteracts the toxicity associated with the formation of D-aminoacyl-tRNA entities in vivo and helps enforce protein L-homochirality. This is D-aminoacyl-tRNA deacylase from Corynebacterium glutamicum (strain R).